The chain runs to 288 residues: 4-hydroxybenzoate octaprenyltransferase (288 aa).

Helical transmembrane passes span 38-58 (IAAQ…GVFL), 98-120 (ILFA…MTIW), 141-161 (LLQV…FSAV), 163-183 (ESLP…SVIY), 213-233 (LIIG…GSLA), 238-258 (VYYI…KLMV), and 268-288 (AFLN…LSYL).

Belongs to the UbiA prenyltransferase family. Mg(2+) serves as cofactor.

The protein localises to the cell inner membrane. The catalysed reaction is all-trans-octaprenyl diphosphate + 4-hydroxybenzoate = 4-hydroxy-3-(all-trans-octaprenyl)benzoate + diphosphate. Its pathway is cofactor biosynthesis; ubiquinone biosynthesis. Functionally, catalyzes the prenylation of para-hydroxybenzoate (PHB) with an all-trans polyprenyl group. Mediates the second step in the final reaction sequence of ubiquinone-8 (UQ-8) biosynthesis, which is the condensation of the polyisoprenoid side chain with PHB, generating the first membrane-bound Q intermediate 3-octaprenyl-4-hydroxybenzoate. The sequence is that of 4-hydroxybenzoate octaprenyltransferase from Providencia stuartii.